The sequence spans 383 residues: Cathepsin D (383 aa).

An N-terminal signal peptide occupies residues 1-18 (MKLLILTLFLATIVLAQA). A propeptide spanning residues 19 to 48 (LTVPLNFHQASRESRRRVPQKWSNRLSALN) is cleaved from the precursor. The 316-residue stretch at 63–378 (YYGAITIGTP…DFGNKQVGFA (316 aa)) folds into the Peptidase A1 domain. Aspartate 81 is a catalytic residue. The cysteines at positions 94 and 101 are disulfide-linked. Asparagine 118 and asparagine 238 each carry an N-linked (GlcNAc...) asparagine glycan. A disulfide bridge connects residues cysteine 259 and cysteine 263. The active site involves aspartate 268. Cysteines 302 and 339 form a disulfide. N-linked (GlcNAc...) asparagine glycosylation is present at asparagine 310.

This sequence belongs to the peptidase A1 family. In terms of assembly, monomer. Post-translationally, N-glycosylated on 2 out of the 3 potential sites. Glycans contain sulfated Mannose.

The protein resides in the lysosome. Its subcellular location is the secreted. The enzyme catalyses Specificity similar to, but narrower than, that of pepsin A. Does not cleave the 4-Gln-|-His-5 bond in B chain of insulin.. Functionally, protease that may act during cell growth and/or development. The polypeptide is Cathepsin D (ctsD) (Dictyostelium discoideum (Social amoeba)).